The sequence spans 275 residues: MAVRKTKPTSPGRRFQEFGTFEEITKKKPEKSLIKVVKKSGGRNANGRVTCRHRGGGSRRQLRIVDFKRNKTGIPAKVAAIEYDPNRGARLALLHYVDGEKRYIIAPVNLTVGDMVESGPEADIKPGNALPLNNIPLGTQIHNIELKVGKGGQVVRGAGTFAQLVAKEGKYAQVRLPSGEVRLVLLKCMATIGQVGNVEHENLALGKAGRKRWLGRRPSVRGVAMNPVDHPMGGGEGRSSGGRHPCSPWGMPTKGYKTRKNKTTDKFIVRKRNKR.

The tract at residues 222 to 275 (GVAMNPVDHPMGGGEGRSSGGRHPCSPWGMPTKGYKTRKNKTTDKFIVRKRNKR) is disordered.

It belongs to the universal ribosomal protein uL2 family. Part of the 50S ribosomal subunit. Forms a bridge to the 30S subunit in the 70S ribosome.

Its function is as follows. One of the primary rRNA binding proteins. Required for association of the 30S and 50S subunits to form the 70S ribosome, for tRNA binding and peptide bond formation. It has been suggested to have peptidyltransferase activity; this is somewhat controversial. Makes several contacts with the 16S rRNA in the 70S ribosome. This is Large ribosomal subunit protein uL2 from Desulfatibacillum aliphaticivorans.